We begin with the raw amino-acid sequence, 352 residues long: S-adenosylmethionine:tRNA ribosyltransferase-isomerase (352 aa).

Belongs to the QueA family. Monomer.

It is found in the cytoplasm. It catalyses the reaction 7-aminomethyl-7-carbaguanosine(34) in tRNA + S-adenosyl-L-methionine = epoxyqueuosine(34) in tRNA + adenine + L-methionine + 2 H(+). Its pathway is tRNA modification; tRNA-queuosine biosynthesis. Functionally, transfers and isomerizes the ribose moiety from AdoMet to the 7-aminomethyl group of 7-deazaguanine (preQ1-tRNA) to give epoxyqueuosine (oQ-tRNA). The polypeptide is S-adenosylmethionine:tRNA ribosyltransferase-isomerase (Bacteroides fragilis (strain ATCC 25285 / DSM 2151 / CCUG 4856 / JCM 11019 / LMG 10263 / NCTC 9343 / Onslow / VPI 2553 / EN-2)).